The chain runs to 208 residues: Fibroblast growth factor 6 (208 aa).

The signal sequence occupies residues 1 to 37 (MALGQKLFITMSRGAGRLQGTLWALVFLGILVGMVVP). N45 carries an N-linked (GlcNAc...) asparagine glycan. A disulfide bond links C90 and C157.

Belongs to the heparin-binding growth factors family. In terms of assembly, interacts with FGFR1, FGFR2 and FGFR4. Affinity between fibroblast growth factors (FGFs) and their receptors is increased by heparan sulfate glycosaminoglycans that function as coreceptors. Leukemia cell lines with platelet/ megakaryocytic differentiation potential.

Its subcellular location is the secreted. It is found in the extracellular space. Functionally, plays an important role in the regulation of cell proliferation, cell differentiation, angiogenesis and myogenesis, and is required for normal muscle regeneration. The polypeptide is Fibroblast growth factor 6 (FGF6) (Homo sapiens (Human)).